Consider the following 140-residue polypeptide: Nucleoside diphosphate kinase (140 aa).

Residues Lys11, Phe59, Arg87, Thr93, Arg104, and Asn114 each coordinate ATP. His117 serves as the catalytic Pros-phosphohistidine intermediate.

This sequence belongs to the NDK family. Homotetramer. The cofactor is Mg(2+).

The protein resides in the cytoplasm. The catalysed reaction is a 2'-deoxyribonucleoside 5'-diphosphate + ATP = a 2'-deoxyribonucleoside 5'-triphosphate + ADP. It catalyses the reaction a ribonucleoside 5'-diphosphate + ATP = a ribonucleoside 5'-triphosphate + ADP. Major role in the synthesis of nucleoside triphosphates other than ATP. The ATP gamma phosphate is transferred to the NDP beta phosphate via a ping-pong mechanism, using a phosphorylated active-site intermediate. The chain is Nucleoside diphosphate kinase from Gluconobacter oxydans (strain 621H) (Gluconobacter suboxydans).